Here is a 532-residue protein sequence, read N- to C-terminus: Chromobox protein homolog 2 (532 aa).

An involved in the interaction with H3C15 and H3C1 region spans residues Met-1–Glu-66. The 59-residue stretch at Phe-12–Arg-70 folds into the Chromo domain. Over residues Lys-60–Asn-69 the composition is skewed to basic and acidic residues. A disordered region spans residues Lys-60 to Leu-204. Over residues Arg-70–Lys-82 the composition is skewed to basic residues. A DNA-binding region (a.T hook) is located at residues Arg-75–Ser-87. Residues Lys-103–Ser-119 are compositionally biased toward low complexity. Basic and acidic residues predominate over residues Leu-128–His-140. Residues Lys-146 and Lys-153 each participate in a glycyl lysine isopeptide (Lys-Gly) (interchain with G-Cter in SUMO2) cross-link. The short motif at Lys-163–Pro-168 is the Nuclear localization signal element. Position 247 is an asymmetric dimethylarginine; alternate (Arg-247). At Arg-247 the chain carries Omega-N-methylarginine; alternate. Disordered regions lie at residues Lys-296–Thr-348 and Lys-379–Trp-493. Residue Ser-302 is modified to Phosphoserine. Residues Ser-464 to Ser-478 show a composition bias toward low complexity. Residues Thr-479–Trp-493 are compositionally biased toward polar residues.

Component of a PRC1-like complex. The composition of the PRC1 complex may differ between the PRC1 complex in pluripotent embryonic stem cells containing RNF2, CBX7 and PCGF2, and the PRC1 complex in differentiating cells containing RNF2, CBX2, CBX4 and BMI1. May interact with H3C15, H3C1 and RNF2. Interacts (via chromodomain) with histone H3K9Me3 and H3K27me3.

The protein resides in the nucleus. The protein localises to the chromosome. Functionally, component of a Polycomb group (PcG) multiprotein PRC1-like complex, a complex class required to maintain the transcriptionally repressive state of many genes, including Hox genes, throughout development. PcG PRC1 complex acts via chromatin remodeling and modification of histones; it mediates monoubiquitination of histone H2A 'Lys-119', rendering chromatin heritably changed in its expressibility. Binds to histone H3 trimethylated at 'Lys-9' (H3K9me3) or at 'Lys-27' (H3K27me3). Plays a role in the lineage differentiation of the germ layers in embryonic development. Involved in sexual development, acting as activator of NR5A1 expression. The polypeptide is Chromobox protein homolog 2 (CBX2) (Homo sapiens (Human)).